Here is a 185-residue protein sequence, read N- to C-terminus: Threonylcarbamoyl-AMP synthase (185 aa).

In terms of domain architecture, YrdC-like spans 4–185 (SFRVQQAARE…LATGEVVRPG (182 aa)).

This sequence belongs to the SUA5 family. TsaC subfamily.

The protein localises to the cytoplasm. It catalyses the reaction L-threonine + hydrogencarbonate + ATP = L-threonylcarbamoyladenylate + diphosphate + H2O. Its function is as follows. Required for the formation of a threonylcarbamoyl group on adenosine at position 37 (t(6)A37) in tRNAs that read codons beginning with adenine. Catalyzes the conversion of L-threonine, HCO(3)(-)/CO(2) and ATP to give threonylcarbamoyl-AMP (TC-AMP) as the acyladenylate intermediate, with the release of diphosphate. The protein is Threonylcarbamoyl-AMP synthase of Pseudomonas putida (strain ATCC 700007 / DSM 6899 / JCM 31910 / BCRC 17059 / LMG 24140 / F1).